A 1118-amino-acid polypeptide reads, in one-letter code: Cytospin-A (1118 aa).

Disordered regions lie at residues 1 to 50, 75 to 175, 294 to 324, and 359 to 391; these read MKKA…AALS, KKSN…DNQI, SLSP…GSVE, and SSDD…NASE. Composition is skewed to low complexity over residues 34-48, 80-90, and 99-113; these read APTG…AAAA, SSAAPSAPAPA, and KSST…RSTS. The segment covering 120-131 has biased composition (basic and acidic residues); it reads SSTRERLRERTR. The span at 133–145 shows a compositional bias: polar residues; the sequence is NQSKKLPSVSQGA. Residues 158–171 show a composition bias toward basic and acidic residues; the sequence is TATEGDIRMSKSKS. Residues 168 to 281 are a coiled coil; it reads KSKSDNQISD…LNALGFSLEQ (114 aa). Over residues 294–304 the composition is skewed to polar residues; the sequence is SLSPEITPGNQ. Residues 359–373 show a composition bias toward low complexity; it reads SSDDALDAPSSSESE. Phosphoserine is present on residues S385, S386, and S390. Coiled-coil stretches lie at residues 395–450 and 488–808; these read ACLT…MESL and RYME…RGRV. Phosphoserine is present on residues S869, S882, and S888. Residues 916–999 form a disordered region; it reads EHLLRTSSTS…STRSRIREER (84 aa). The segment covering 947–957 has biased composition (basic and acidic residues); that stretch reads RSSEEMKRDIS. Residues 972 to 992 show a composition bias toward low complexity; it reads TTSPQLSLSSSPTASVTPSTR. In terms of domain architecture, Calponin-homology (CH) spans 1012-1117; it reads GSKRNALLKW…YVTAIYKYFE (106 aa).

The protein belongs to the cytospin-A family. As to quaternary structure, may interact with both microtubules and actin cytoskeleton.

Its subcellular location is the cytoplasm. The protein localises to the cytoskeleton. It is found in the spindle. It localises to the cell junction. The protein resides in the gap junction. Involved in cytokinesis and spindle organization. May play a role in actin cytoskeleton organization and microtubule stabilization and hence required for proper cell adhesion and migration. The polypeptide is Cytospin-A (Specc1l) (Rattus norvegicus (Rat)).